A 198-amino-acid chain; its full sequence is Transcription factor FapR (198 aa).

Positions 102-169 (NRIARGHHLF…RTIVEVNSYV (68 aa)) constitute a MaoC-like domain.

This sequence belongs to the FapR family.

Functionally, transcriptional factor involved in regulation of membrane lipid biosynthesis by repressing genes involved in fatty acid and phospholipid metabolism. The sequence is that of Transcription factor FapR from Geobacillus sp. (strain WCH70).